Reading from the N-terminus, the 461-residue chain is MAATVNLELDPIFLKALGFLHSKSKDSAEKLKALLDESLARGIDSSYRPTQKDVEPPKISSTKSLSIKQEPKTSSSLPSGSSNGKVLTAEKIKKEAEKRPADKMKDVTEGIDVPKKPRLEKPETRSSPITVQTSKDLSMADLSSFEETSADDFAMEMGLACVVCRQMTVASGNQLVECQECHNLYHQDCHKPQVTDKEVNDPRLVWYCARCTRQMKRMAQKTQKPPQKPAPTVVSVTPTVKDPLVKKPETKLKQETTFLAFKRTEVKPSTVISGNSSSNNVSSSVTSGLTGWAAFAAKTSSAGPSTAKLNSAAQNSSGKPAASSSNQKPVGLTGLATSSKGGIGSKIGSGNSTSPSVPLKPLPPLTLGKTGLSRSVSCDNVSKVGLPSPSSLVPGGSSQLSGNGNSATTGPSGSTTSKATSETSSSTSASLKGPTSQESQLNAMKRLQMVKKKAAQKKLKK.

The disordered stretch occupies residues 42–131 (GIDSSYRPTQ…PETRSSPITV (90 aa)). Lys68 is covalently cross-linked (Glycyl lysine isopeptide (Lys-Gly) (interchain with G-Cter in SUMO2)). Basic and acidic residues predominate over residues 88–124 (TAEKIKKEAEKRPADKMKDVTEGIDVPKKPRLEKPET). Ser127 bears the Phosphoserine mark. The segment at 158–214 (GLACVVCRQMTVASGNQLVECQECHNLYHQDCHKPQVTDKEVNDPRLVWYCARCTRQ) adopts a PHD-type zinc-finger fold. Residue Lys253 forms a Glycyl lysine isopeptide (Lys-Gly) (interchain with G-Cter in SUMO2) linkage. Residues 302 to 328 (AGPSTAKLNSAAQNSSGKPAASSSNQK) show a composition bias toward polar residues. The segment at 302–443 (AGPSTAKLNS…PTSQESQLNA (142 aa)) is disordered. 2 stretches are compositionally biased toward low complexity: residues 348-357 (GSGNSTSPSV) and 381-436 (VSKV…GPTS).

Belongs to the Integrator subunit 12 family. As to quaternary structure, component of the Integrator complex, composed of core subunits INTS1, INTS2, INTS3, INTS4, INTS5, INTS6, INTS7, INTS8, INTS9/RC74, INTS10, INTS11/CPSF3L, INTS12, INTS13, INTS14 and INTS15. The core complex associates with protein phosphatase 2A subunits PPP2CA and PPP2R1A, to form the Integrator-PP2A (INTAC) complex. Post-translationally, dephosphorylated at Ser-127 by the PNUTS-PP1 complex, promoting RNA polymerase II transcription pause-release.

The protein resides in the nucleus. Component of the integrator complex, a multiprotein complex that terminates RNA polymerase II (Pol II) transcription in the promoter-proximal region of genes. The integrator complex provides a quality checkpoint during transcription elongation by driving premature transcription termination of transcripts that are unfavorably configured for transcriptional elongation: the complex terminates transcription by (1) catalyzing dephosphorylation of the C-terminal domain (CTD) of Pol II subunit POLR2A/RPB1 and SUPT5H/SPT5, (2) degrading the exiting nascent RNA transcript via endonuclease activity and (3) promoting the release of Pol II from bound DNA. The integrator complex is also involved in terminating the synthesis of non-coding Pol II transcripts, such as enhancer RNAs (eRNAs), small nuclear RNAs (snRNAs), telomerase RNAs and long non-coding RNAs (lncRNAs). Mediates recruitment of cytoplasmic dynein to the nuclear envelope, probably as component of the integrator complex. This chain is Integrator complex subunit 12 (Ints12), found in Mus musculus (Mouse).